We begin with the raw amino-acid sequence, 377 residues long: UPF0754 membrane protein lmo2224 (377 aa).

The next 2 helical transmembrane spans lie at 1-21 (MSVL…GAMT) and 357-377 (YLGG…AMWI).

It belongs to the UPF0754 family.

It localises to the cell membrane. In Listeria monocytogenes serovar 1/2a (strain ATCC BAA-679 / EGD-e), this protein is UPF0754 membrane protein lmo2224.